We begin with the raw amino-acid sequence, 335 residues long: Large ribosomal subunit protein uL3 (335 aa).

Positions 1 to 20 (MATIHRPRRGSLAFSPRKRA) are disordered.

It belongs to the universal ribosomal protein uL3 family. In terms of assembly, part of the 50S ribosomal subunit. Forms a cluster with proteins L14 and L24e.

Its function is as follows. One of the primary rRNA binding proteins, it binds directly near the 3'-end of the 23S rRNA, where it nucleates assembly of the 50S subunit. The protein is Large ribosomal subunit protein uL3 of Methanothrix thermoacetophila (strain DSM 6194 / JCM 14653 / NBRC 101360 / PT) (Methanosaeta thermophila).